Consider the following 218-residue polypeptide: Adenylate kinase (218 aa).

10–15 (GAGKGT) lines the ATP pocket. The NMP stretch occupies residues 30–59 (STGDMLRAAVKAGTPLGLEAKKVMDAGGLV). Residues T31, R36, 57–59 (GLV), 85–88 (GFPR), and Q92 contribute to the AMP site. Residues 122-159 (GRRVHPASGRVYHTKYNPPKVEGKDDETGDELVQRDDD) are LID. Residues R123 and 132–133 (VY) contribute to the ATP site. Residues 139–160 (PPKVEGKDDETGDELVQRDDDQ) are disordered. Residues R156 and R167 each coordinate AMP. An ATP-binding site is contributed by G203.

Belongs to the adenylate kinase family. In terms of assembly, monomer.

The protein resides in the cytoplasm. It carries out the reaction AMP + ATP = 2 ADP. The protein operates within purine metabolism; AMP biosynthesis via salvage pathway; AMP from ADP: step 1/1. Catalyzes the reversible transfer of the terminal phosphate group between ATP and AMP. Plays an important role in cellular energy homeostasis and in adenine nucleotide metabolism. The sequence is that of Adenylate kinase from Alcanivorax borkumensis (strain ATCC 700651 / DSM 11573 / NCIMB 13689 / SK2).